Here is an 883-residue protein sequence, read N- to C-terminus: Alanine--tRNA ligase (883 aa).

Zn(2+)-binding residues include His562, His566, Cys675, and His679.

It belongs to the class-II aminoacyl-tRNA synthetase family. Zn(2+) serves as cofactor.

Its subcellular location is the cytoplasm. The catalysed reaction is tRNA(Ala) + L-alanine + ATP = L-alanyl-tRNA(Ala) + AMP + diphosphate. Its function is as follows. Catalyzes the attachment of alanine to tRNA(Ala) in a two-step reaction: alanine is first activated by ATP to form Ala-AMP and then transferred to the acceptor end of tRNA(Ala). Also edits incorrectly charged Ser-tRNA(Ala) and Gly-tRNA(Ala) via its editing domain. This Ruegeria sp. (strain TM1040) (Silicibacter sp.) protein is Alanine--tRNA ligase.